A 234-amino-acid polypeptide reads, in one-letter code: Ribosomal RNA small subunit methyltransferase G (234 aa).

S-adenosyl-L-methionine contacts are provided by residues glycine 74, phenylalanine 79, alanine 125–glutamate 126, and arginine 144.

Belongs to the methyltransferase superfamily. RNA methyltransferase RsmG family.

The protein localises to the cytoplasm. Its function is as follows. Specifically methylates the N7 position of a guanine in 16S rRNA. This is Ribosomal RNA small subunit methyltransferase G from Roseiflexus castenholzii (strain DSM 13941 / HLO8).